Consider the following 351-residue polypeptide: Dihydroorotate dehydrogenase (quinone) (351 aa).

FMN contacts are provided by residues 65 to 69 and T89; that span reads AGLDK. Residue K69 participates in substrate binding. 114–118 provides a ligand contact to substrate; sequence NRLGF. FMN contacts are provided by N150 and N183. N183 contributes to the substrate binding site. S186 acts as the Nucleophile in catalysis. N188 is a substrate binding site. 2 residues coordinate FMN: K228 and T256. 257–258 is a binding site for substrate; the sequence is NT. FMN contacts are provided by residues G279, G308, and 329–330; that span reads YT.

Belongs to the dihydroorotate dehydrogenase family. Type 2 subfamily. In terms of assembly, monomer. The cofactor is FMN.

It localises to the cell membrane. It carries out the reaction (S)-dihydroorotate + a quinone = orotate + a quinol. It functions in the pathway pyrimidine metabolism; UMP biosynthesis via de novo pathway; orotate from (S)-dihydroorotate (quinone route): step 1/1. In terms of biological role, catalyzes the conversion of dihydroorotate to orotate with quinone as electron acceptor. This chain is Dihydroorotate dehydrogenase (quinone), found in Acidovorax sp. (strain JS42).